We begin with the raw amino-acid sequence, 363 residues long: Guanine nucleotide-binding protein alpha-11 subunit (363 aa).

One can recognise a G-alpha domain in the interval 26-363 (KMLKILLLGG…KISMEKVGFM (338 aa)). A G1 motif region spans residues 29–42 (KILLLGGPECGKST). GTP contacts are provided by residues 34-41 (GGPECGKS), 172-178 (LRARVPT), 197-201 (DVGGQ), 276-279 (NKID), and alanine 335. Mg(2+) is bound by residues serine 41 and threonine 178. Positions 170–178 (DVLRARVPT) are G2 motif. The G3 motif stretch occupies residues 193–202 (LRMVDVGGQR). The interval 272–279 (ILFLNKID) is G4 motif. A G5 motif region spans residues 333-338 (TNATDT).

The protein belongs to the G-alpha family. G proteins are composed of 3 units; alpha, beta and gamma. The alpha chain contains the guanine nucleotide binding site. In terms of tissue distribution, expressed in ADL and ASH neurons.

Its function is as follows. Guanine nucleotide-binding proteins (G proteins) are involved as modulators or transducers in various transmembrane signaling systems. Mediates the transduction of food and serotonin signals, which modulates the avoidance response to the odorant octanol. Has a role in lifespan to promote longevity. The protein is Guanine nucleotide-binding protein alpha-11 subunit (gpa-11) of Caenorhabditis elegans.